Consider the following 94-residue polypeptide: Beta-diguetoxin-Dc1a (94 aa).

Residues 1–17 form the signal peptide; the sequence is MKVFVVLLCLSLAAVYA. A propeptide spanning residues 18–38 is cleaved from the precursor; it reads LEERLDKDADIMLDSPADMER. 4 cysteine pairs are disulfide-bonded: Cys50–Cys63, Cys57–Cys77, Cys62–Cys91, and Cys79–Cys89.

This sequence belongs to the neurotoxin 26 (DTX) family. Expressed by the venom gland.

The protein resides in the secreted. Its function is as follows. Insecticidal toxin. This toxin promotes opening of insect Nav channels. The toxin binds to the S1-S2 and S3-S4 loops in the domain II voltage-sensor of insect Nav channels (i.e., receptor site 4). The American cockroach P.americana is largely resistant to the effects of this toxin due to an unusual sequence within the domain II S1-S2 loop. In vivo, paralyzes lepidopteran and dipteran larvae. Paralyzed insects ultimately die from secondary effects of starvation and dehydration. The protein is Beta-diguetoxin-Dc1a of Diguetia canities (Desert bush spider).